A 77-amino-acid polypeptide reads, in one-letter code: MGSLSIWHWIVVIAVVLLLFGRGKISDLMGDVAQGIKAFKKGMQDDDKAPEKTEPVKSIDHGATPSATRTDVGSKAV.

Residues 1–21 (MGSLSIWHWIVVIAVVLLLFG) form a helical membrane-spanning segment. Over residues 43–60 (MQDDDKAPEKTEPVKSID) the composition is skewed to basic and acidic residues. The segment at 43 to 77 (MQDDDKAPEKTEPVKSIDHGATPSATRTDVGSKAV) is disordered.

This sequence belongs to the TatA/E family. In terms of assembly, the Tat system comprises two distinct complexes: a TatABC complex, containing multiple copies of TatA, TatB and TatC subunits, and a separate TatA complex, containing only TatA subunits. Substrates initially bind to the TatABC complex, which probably triggers association of the separate TatA complex to form the active translocon.

The protein localises to the cell inner membrane. Its function is as follows. Part of the twin-arginine translocation (Tat) system that transports large folded proteins containing a characteristic twin-arginine motif in their signal peptide across membranes. TatA could form the protein-conducting channel of the Tat system. This Bradyrhizobium sp. (strain BTAi1 / ATCC BAA-1182) protein is Sec-independent protein translocase protein TatA.